The primary structure comprises 142 residues: Hemoglobin subunit alpha-2 (142 aa).

The Globin domain maps to leucine 2–arginine 142. Residue histidine 59 participates in O2 binding. Histidine 88 contributes to the heme b binding site.

It belongs to the globin family. As to quaternary structure, heterotetramer of two alpha chains and two beta chains. In terms of tissue distribution, red blood cells.

Its function is as follows. Involved in oxygen transport from the lung to the various peripheral tissues. In Xenopus borealis (Kenyan clawed frog), this protein is Hemoglobin subunit alpha-2 (hba2).